Reading from the N-terminus, the 429-residue chain is 3-phosphoshikimate 1-carboxyvinyltransferase (429 aa).

3-phosphoshikimate is bound by residues Lys23, Ser24, and Arg28. Lys23 contributes to the phosphoenolpyruvate binding site. Residues Gly95 and Arg123 each contribute to the phosphoenolpyruvate site. 3-phosphoshikimate-binding residues include Ser168, Gln170, Asp316, and Lys343. Gln170 is a binding site for phosphoenolpyruvate. The Proton acceptor role is filled by Asp316. Residues Arg347 and Arg389 each contribute to the phosphoenolpyruvate site.

The protein belongs to the EPSP synthase family. In terms of assembly, monomer.

It is found in the cytoplasm. It carries out the reaction 3-phosphoshikimate + phosphoenolpyruvate = 5-O-(1-carboxyvinyl)-3-phosphoshikimate + phosphate. Its pathway is metabolic intermediate biosynthesis; chorismate biosynthesis; chorismate from D-erythrose 4-phosphate and phosphoenolpyruvate: step 6/7. Its function is as follows. Catalyzes the transfer of the enolpyruvyl moiety of phosphoenolpyruvate (PEP) to the 5-hydroxyl of shikimate-3-phosphate (S3P) to produce enolpyruvyl shikimate-3-phosphate and inorganic phosphate. This is 3-phosphoshikimate 1-carboxyvinyltransferase from Bacillus anthracis (strain A0248).